The primary structure comprises 740 residues: Ion-translocating oxidoreductase complex subunit C (740 aa).

2 4Fe-4S ferredoxin-type domains span residues 369-397 (GEPQEEQSCIRCSACADACPADLLPQQLY) and 407-436 (KATTHNIADCIECGACAWVCPSNIPLVQYF). Residues cysteine 377, cysteine 380, cysteine 383, cysteine 387, cysteine 416, cysteine 419, cysteine 422, and cysteine 426 each contribute to the [4Fe-4S] cluster site. 2 disordered regions span residues 602–621 (KLEQQQANAKPEEQVDPRKA) and 660–718 (ARAK…RKAA). A compositionally biased stretch (basic and acidic residues) spans 611 to 621 (KPEEQVDPRKA).

The protein belongs to the 4Fe4S bacterial-type ferredoxin family. RnfC subfamily. The complex is composed of six subunits: RsxA, RsxB, RsxC, RsxD, RsxE and RsxG. [4Fe-4S] cluster is required as a cofactor.

It localises to the cell inner membrane. Its function is as follows. Part of a membrane-bound complex that couples electron transfer with translocation of ions across the membrane. Required to maintain the reduced state of SoxR. The chain is Ion-translocating oxidoreductase complex subunit C from Escherichia coli O9:H4 (strain HS).